Consider the following 61-residue polypeptide: Small ribosomal subunit protein uS14 (61 aa).

Zn(2+)-binding residues include cysteine 24, cysteine 27, cysteine 40, and cysteine 43.

Belongs to the universal ribosomal protein uS14 family. Zinc-binding uS14 subfamily. As to quaternary structure, part of the 30S ribosomal subunit. Contacts proteins S3 and S10. Zn(2+) is required as a cofactor.

Its function is as follows. Binds 16S rRNA, required for the assembly of 30S particles and may also be responsible for determining the conformation of the 16S rRNA at the A site. The sequence is that of Small ribosomal subunit protein uS14 from Alkaliphilus oremlandii (strain OhILAs) (Clostridium oremlandii (strain OhILAs)).